We begin with the raw amino-acid sequence, 278 residues long: Undecaprenyl-diphosphatase 1 (278 aa).

5 consecutive transmembrane segments (helical) span residues 85-105, 108-128, 188-208, 218-238, and 254-274; these read LNVI…EKTI, ALFS…VILW, VATE…TAYE, VDAL…AFAC, and FAWY…SGAL.

Belongs to the UppP family.

Its subcellular location is the cell inner membrane. It carries out the reaction di-trans,octa-cis-undecaprenyl diphosphate + H2O = di-trans,octa-cis-undecaprenyl phosphate + phosphate + H(+). In terms of biological role, catalyzes the dephosphorylation of undecaprenyl diphosphate (UPP). Confers resistance to bacitracin. The protein is Undecaprenyl-diphosphatase 1 of Paraburkholderia xenovorans (strain LB400).